A 184-amino-acid chain; its full sequence is ATP synthase subunit delta (184 aa).

This sequence belongs to the ATPase delta chain family. F-type ATPases have 2 components, F(1) - the catalytic core - and F(0) - the membrane proton channel. F(1) has five subunits: alpha(3), beta(3), gamma(1), delta(1), epsilon(1). F(0) has three main subunits: a(1), b(2) and c(10-14). The alpha and beta chains form an alternating ring which encloses part of the gamma chain. F(1) is attached to F(0) by a central stalk formed by the gamma and epsilon chains, while a peripheral stalk is formed by the delta and b chains.

It localises to the cell membrane. In terms of biological role, f(1)F(0) ATP synthase produces ATP from ADP in the presence of a proton or sodium gradient. F-type ATPases consist of two structural domains, F(1) containing the extramembraneous catalytic core and F(0) containing the membrane proton channel, linked together by a central stalk and a peripheral stalk. During catalysis, ATP synthesis in the catalytic domain of F(1) is coupled via a rotary mechanism of the central stalk subunits to proton translocation. Functionally, this protein is part of the stalk that links CF(0) to CF(1). It either transmits conformational changes from CF(0) to CF(1) or is implicated in proton conduction. The chain is ATP synthase subunit delta from Rickettsia africae (strain ESF-5).